We begin with the raw amino-acid sequence, 509 residues long: Metal transporter Nramp3 (509 aa).

Low complexity predominate over residues 1–12 (MPQLENNEPLLI). The tract at residues 1-25 (MPQLENNEPLLINEEEEEETAYDET) is disordered. Residues 13 to 23 (NEEEEEETAYD) are compositionally biased toward acidic residues. 12 helical membrane-spanning segments follow: residues 56–76 (LWLF…PGNL), 84–104 (AVAG…GLLV), 133–153 (MVLW…EVIG), 165–185 (ILPL…FLFL), 193–213 (LEAV…WMFG), 239–259 (AVGV…SALV), 285–305 (IALF…AKGF), 327–347 (YGGG…AAGQ), 383–403 (IIPT…LDVL), 406–426 (WLNV…LCLV), 444–464 (IAWL…LEFF), and 472–492 (VYTG…LYLI).

It belongs to the NRAMP (TC 2.A.55) family. As to expression, expressed in vascular tissues.

The protein resides in the vacuole membrane. Functionally, vacuolar metal transporter involved in intracellular metal homeostasis. Can transport iron (Fe), manganese (Mn) and cadmium (Cd). Regulates metal accumulation under Fe starvation. Acts redundantly with NRAMP4 to mobilize vacuolar Fe and provide sufficient Fe during seed germination. In association with NRAMP4, required for optimal growth and photosynthesis under Mn deficiency. Exports Mn from vacuoles in leaf mesophyll cells, making Mn available for functional photosystem II in chloroplasts. Involved in basal resistance to the bacterial pathogen E.chrysanthemi. This Arabidopsis thaliana (Mouse-ear cress) protein is Metal transporter Nramp3 (NRAMP3).